A 170-amino-acid polypeptide reads, in one-letter code: Transcription factor E (170 aa).

One can recognise an HTH TFE/IIEalpha-type domain in the interval 1–93; sequence MKDVYLYIVE…TWYVNDEVIS (93 aa).

The protein belongs to the TFE family. In terms of assembly, monomer. Interaction with RNA polymerase subunits RpoF and RpoE is necessary for Tfe stimulatory transcription activity. Able to interact with Tbp and RNA polymerase in the absence of DNA promoter. Interacts both with the preinitiation and elongation complexes.

Functionally, transcription factor that plays a role in the activation of archaeal genes transcribed by RNA polymerase. Facilitates transcription initiation by enhancing TATA-box recognition by TATA-box-binding protein (Tbp), and transcription factor B (Tfb) and RNA polymerase recruitment. Not absolutely required for transcription in vitro, but particularly important in cases where Tbp or Tfb function is not optimal. It dynamically alters the nucleic acid-binding properties of RNA polymerases by stabilizing the initiation complex and destabilizing elongation complexes. Seems to translocate with the RNA polymerase following initiation and acts by binding to the non template strand of the transcription bubble in elongation complexes. In Pyrobaculum calidifontis (strain DSM 21063 / JCM 11548 / VA1), this protein is Transcription factor E.